The primary structure comprises 392 residues: GTPase Obg (392 aa).

The 159-residue stretch at 1–159 (MKFVDEATIK…RELRLELLLL (159 aa)) folds into the Obg domain. The 174-residue stretch at 160–333 (ADVGMLGLPN…VCNELSDFMD (174 aa)) folds into the OBG-type G domain. Residues 166 to 173 (GLPNAGKS), 191 to 195 (FTTLI), 213 to 216 (DIPG), 283 to 286 (NKTD), and 314 to 316 (AAV) contribute to the GTP site. Mg(2+)-binding residues include S173 and T193. Residues 364–392 (GKNVVTEDGDDDDDWDDEEDDGHVIYARD) form a disordered region. The segment covering 370-384 (EDGDDDDDWDDEEDD) has biased composition (acidic residues).

This sequence belongs to the TRAFAC class OBG-HflX-like GTPase superfamily. OBG GTPase family. In terms of assembly, monomer. Mg(2+) is required as a cofactor.

The protein localises to the cytoplasm. In terms of biological role, an essential GTPase which binds GTP, GDP and possibly (p)ppGpp with moderate affinity, with high nucleotide exchange rates and a fairly low GTP hydrolysis rate. Plays a role in control of the cell cycle, stress response, ribosome biogenesis and in those bacteria that undergo differentiation, in morphogenesis control. The sequence is that of GTPase Obg from Aliivibrio salmonicida (strain LFI1238) (Vibrio salmonicida (strain LFI1238)).